The chain runs to 336 residues: MLIAQRPTLSEEVVSENRSRFIIEPLEPGFGYTLGNSLRRTLLSSIPGAAVTSIRIDGVLHEFTTVPGVKEDVTEIILNIKNLSVSSEHDEPVVAYLRKQGPGVVTAADIAPPAGVEFHNPDLHIATLNSKGKFELELTIERGRGYVSAAQNKSGDSEIGRIPVDSIYSPVLKVTFRVEATRVEQRTDFDKLIVDVETKQAIAPRDAVASAGTTLVELFGLARELNTAAEGIEIGPSPTDAALAADMALPIEDLDLTVRSYNCLKREGIHTVGELVARSEADLMDIRNFGAKSIDEVKAKLVELGLSLKDSPPGFDLAARAAAIEEDDAAFSDDEL.

The segment at 1–226 is alpha N-terminal domain (alpha-NTD); it reads MLIAQRPTLS…ELFGLARELN (226 aa). The alpha C-terminal domain (alpha-CTD) stretch occupies residues 241 to 336; it reads AALAADMALP…DDAAFSDDEL (96 aa).

This sequence belongs to the RNA polymerase alpha chain family. Homodimer. The RNAP catalytic core consists of 2 alpha, 1 beta, 1 beta' and 1 omega subunit. When a sigma factor is associated with the core the holoenzyme is formed, which can initiate transcription.

The catalysed reaction is RNA(n) + a ribonucleoside 5'-triphosphate = RNA(n+1) + diphosphate. Its function is as follows. DNA-dependent RNA polymerase catalyzes the transcription of DNA into RNA using the four ribonucleoside triphosphates as substrates. The chain is DNA-directed RNA polymerase subunit alpha from Arthrobacter sp. (strain FB24).